Reading from the N-terminus, the 822-residue chain is MWGWRGLLFWAVLVTATLCTARPAPTLPEQAQPWGVPVEVESLLVHPGDLLQLRCRLRDDVQSINWLRDGVQLAESNRTRITGEEVEVRDSIPADSGLYACVTNSPSGSDTTYFSVNVSDALPSSEDDDDDDDSSSEEKETDNTKPNRRPVAPYWTSPEKMEKKLHAVPAAKTVKFKCPSSGTPSPTLRWLKNGKEFKPDHRIGGYKVRYATWSIIMDSVVPSDKGNYTCIVENEYGSINHTYQLDVVERSPHRPILQAGLPANKTVALGSNVEFMCKVYSDPQPHIQWLKHIEVNGSKIGPDNLPYDQILKTAGVNTTDKEMEVLHLRNVSFEDAGEYTCLAGNSIGLSHHSAWLTVLEALEERPAVMTSPLYLEIIIYCTGAFLISCMVGSVIIYKMKSGTKKSDFHSQMAVHKLAKSIPLRRQVTVSADSSASMNSGVLLVRPSRLSSSGTPMLAGVSEYELPEDPRWELPRDRLVLGKPLGEGCFGQVVLAEAIGLDKDKPNRVTKVAVKMLKSDATEKDLSDLISEMEMMKMIGKHKNIINLLGACTQDGPLYVIVEYASKGNLREYLQARRPPGLEYCYNPSHNPEEQLSSKDLVSCAYQVARGMEYLASKKCIHRDLAARNVLVTEDNVMKIADFGLARDIHHIDYYKKTTNGRLPVKWMAPEALFDRIYTHQSDVWSFGVLLWEIFTLGGSPNPGVPVEELFKLLKEGHRMDKPSNCTNELYMMMRDCWNAVPSQRPTFKQLVEDLDRIVALTSNQEYLDLSMPLDQDSPSFPDTRSSTCSSGEDSVFSHEPFPEEPCLPRHPTQLANGGLNRR.

The N-terminal stretch at 1–21 is a signal peptide; sequence MWGWRGLLFWAVLVTATLCTA. Residues 22–376 are Extracellular-facing; that stretch reads RPAPTLPEQA…AVMTSPLYLE (355 aa). The region spanning 25–119 is the Ig-like C2-type 1 domain; the sequence is PTLPEQAQPW…DTTYFSVNVS (95 aa). Cys-55 and Cys-101 are joined by a disulfide. N-linked (GlcNAc...) asparagine glycans are attached at residues Asn-77 and Asn-117. Residues 120-162 form a disordered region; sequence DALPSSEDDDDDDDSSSEEKETDNTKPNRRPVAPYWTSPEKME. A compositionally biased stretch (acidic residues) spans 125–135; sequence SEDDDDDDDSS. Positions 136–145 are enriched in basic and acidic residues; sequence SEEKETDNTK. 2 consecutive Ig-like C2-type domains span residues 158–246 and 255–357; these read PEKM…YQLD and PILQ…AWLT. The segment at 160-177 is heparin-binding; sequence KMEKKLHAVPAAKTVKFK. An intrachain disulfide couples Cys-178 to Cys-230. Asn-227, Asn-240, Asn-264, Asn-296, Asn-317, and Asn-330 each carry an N-linked (GlcNAc...) asparagine glycan. Residues Cys-277 and Cys-341 are joined by a disulfide bond. A helical transmembrane segment spans residues 377–397; sequence IIIYCTGAFLISCMVGSVIIY. The Cytoplasmic segment spans residues 398–822; that stretch reads KMKSGTKKSD…QLANGGLNRR (425 aa). Tyr-463 bears the Phosphotyrosine; by autocatalysis mark. One can recognise a Protein kinase domain in the interval 478–767; it reads LVLGKPLGEG…VALTSNQEYL (290 aa). ATP-binding positions include 484-490, Lys-514, 562-564, and Asn-568; these read LGEGCFG and EYA. Tyr-583 and Tyr-585 each carry phosphotyrosine; by autocatalysis. Asp-623 (proton acceptor) is an active-site residue. Positions 627 and 641 each coordinate ATP. Phosphotyrosine; by autocatalysis occurs at positions 653, 654, 730, and 766. Residues 770-822 form a disordered region; that stretch reads SMPLDQDSPSFPDTRSSTCSSGEDSVFSHEPFPEEPCLPRHPTQLANGGLNRR. A compositionally biased stretch (polar residues) spans 776-792; it reads DSPSFPDTRSSTCSSGE.

This sequence belongs to the protein kinase superfamily. Tyr protein kinase family. Fibroblast growth factor receptor subfamily. As to quaternary structure, monomer. Homodimer after ligand binding. Interacts predominantly with FGF1 and FGF2, but can also interact with FGF3, FGF4, FGF5, FGF6, FGF8, FGF10, FGF19, FGF21, FGF22 and FGF23 (in vitro). Ligand specificity is determined by tissue-specific expression of isoforms, and differences in the third Ig-like domain are crucial for ligand specificity. Affinity for fibroblast growth factors (FGFs) is increased by heparan sulfate glycosaminoglycans that function as coreceptors. Likewise, KLB increases the affinity for FGF19, FGF21 and FGF23. Interacts (phosphorylated on Tyr-766) with PLCG1 (via SH2 domains). Interacts with FRS2. Interacts (via C-terminus) with NEDD4 (via WW3 domain). Interacts with RPS6KA1. Interacts with KL. Interacts with SHB (via SH2 domain) and GRB10. Interacts with ANOS1; this interaction does not interfere with FGF2-binding to FGFR1, but prevents binding of heparin-bound FGF2. Interacts with SOX2 and SOX3. Interacts with FLRT1, FLRT2 and FLRT3. Found in a ternary complex with FGF1 and ITGAV:ITGB3. Post-translationally, autophosphorylated. Binding of FGF family members together with heparan sulfate proteoglycan or heparin promotes receptor dimerization and autophosphorylation on tyrosine residues. Autophosphorylation occurs in trans between the two FGFR molecules present in the dimer and proceeds in a highly ordered manner. Initial autophosphorylation at Tyr-653 increases the kinase activity by a factor of 50 to 100. After this, Tyr-583 becomes phosphorylated, followed by phosphorylation of Tyr-463, Tyr-766, Tyr-583 and Tyr-585. In a third stage, Tyr-654 is autophosphorylated, resulting in a further tenfold increase of kinase activity. Phosphotyrosine residues provide docking sites for interacting proteins and so are crucial for FGFR1 function and its regulation. In terms of processing, ubiquitinated. FGFR1 is rapidly ubiquitinated by NEDD4 after autophosphorylation, leading to internalization and lysosomal degradation. CBL is recruited to activated FGFR1 via FRS2 and GRB2, and mediates ubiquitination and subsequent degradation of FGFR1. N-glycosylated in the endoplasmic reticulum. The N-glycan chains undergo further maturation to an Endo H-resistant form in the Golgi apparatus. Expressed in the parathyroid.

It localises to the cell membrane. The protein localises to the nucleus. It is found in the cytoplasm. Its subcellular location is the cytosol. The protein resides in the cytoplasmic vesicle. It catalyses the reaction L-tyrosyl-[protein] + ATP = O-phospho-L-tyrosyl-[protein] + ADP + H(+). Its activity is regulated as follows. Present in an inactive conformation in the absence of bound ligand. Ligand binding leads to dimerization and activation by sequential autophosphorylation on tyrosine residues. Tyrosine-protein kinase that acts as a cell-surface receptor for fibroblast growth factors and plays an essential role in the regulation of embryonic development, cell proliferation, differentiation and migration. Required for normal mesoderm patterning and correct axial organization during embryonic development, normal skeletogenesis and normal development of the gonadotropin-releasing hormone (GnRH) neuronal system. Phosphorylates PLCG1, FRS2, GAB1 and SHB. Ligand binding leads to the activation of several signaling cascades. Activation of PLCG1 leads to the production of the cellular signaling molecules diacylglycerol and inositol 1,4,5-trisphosphate. Phosphorylation of FRS2 triggers recruitment of GRB2, GAB1, PIK3R1 and SOS1, and mediates activation of RAS, MAPK1/ERK2, MAPK3/ERK1 and the MAP kinase signaling pathway, as well as of the AKT1 signaling pathway. Promotes phosphorylation of SHC1, STAT1 and PTPN11/SHP2. In the nucleus, enhances RPS6KA1 and CREB1 activity and contributes to the regulation of transcription. FGFR1 signaling is down-regulated by IL17RD/SEF, and by FGFR1 ubiquitination, internalization and degradation. The sequence is that of Fibroblast growth factor receptor 1 (Fgfr1) from Rattus norvegicus (Rat).